Consider the following 182-residue polypeptide: Ribosome-recycling factor (182 aa).

Residues 137-158 (KKSEKESEISEDQSRDEQDNVQ) form a disordered region.

Belongs to the RRF family.

It localises to the cytoplasm. Its function is as follows. Responsible for the release of ribosomes from messenger RNA at the termination of protein biosynthesis. May increase the efficiency of translation by recycling ribosomes from one round of translation to another. This Prochlorococcus marinus (strain MIT 9211) protein is Ribosome-recycling factor.